We begin with the raw amino-acid sequence, 481 residues long: F-box/LRR-repeat protein At3g03360 (481 aa).

The tract at residues 1–28 (MEKESQENSTRPDASSTVFSSSKSTCAS) is disordered. The segment covering 14-28 (ASSTVFSSSKSTCAS) has biased composition (low complexity). One can recognise an F-box domain in the interval 36-84 (GDLISRLPDDILQLILSYLPTRLAIKTSVLSRRWRHVWSDTWSLSFHRD). LRR repeat units follow at residues 118 to 145 (SRPD…SLYL), 196 to 221 (HCNI…LLFF), 295 to 320 (EADF…TLGA), 350 to 375 (ISRY…TIHP), and 413 to 439 (RRNV…ELIV).

The polypeptide is F-box/LRR-repeat protein At3g03360 (Arabidopsis thaliana (Mouse-ear cress)).